Here is a 209-residue protein sequence, read N- to C-terminus: CASP-like protein 2A1 (209 aa).

Topologically, residues 1–38 (MSKMAEEKVLAAPATVDGGMQSSGDLQASSAAAARVRP) are cytoplasmic. A helical transmembrane segment spans residues 39-59 (VETLLRAAPLGLCVAAMAIML). Residues 60–80 (RNSVTNEYGTVSYSDLGGFKY) are Extracellular-facing. The helical transmembrane segment at 81-101 (LVYANGLCAAYSLASAFYIAV) threads the bilayer. Topologically, residues 102–109 (PRPATLSR) are cytoplasmic. The helical transmembrane segment at 110–130 (SWVVFLLDQVFTYLILAAGAA) threads the bilayer. At 131–163 (SAELLYLAYNGDKEVTWSEACGVFGGFCRQART) the chain is on the extracellular side. The helical transmembrane segment at 164–184 (SVAITFASVACYILLSLISSY) threads the bilayer. Over 185–209 (RLFSAYDPPQPSLGNKGVEIAAFPR) the chain is Cytoplasmic.

This sequence belongs to the Casparian strip membrane proteins (CASP) family. In terms of assembly, homodimer and heterodimers.

It localises to the cell membrane. The chain is CASP-like protein 2A1 from Oryza sativa subsp. indica (Rice).